The sequence spans 538 residues: Cytochrome P450 monooxygenase cfoH (538 aa).

Residues 24–44 (VLTFFAILLVAILLWYMIPYF) traverse the membrane as a helical segment. Cysteine 471 is a binding site for heme.

The protein belongs to the cytochrome P450 family. Heme serves as cofactor.

The protein localises to the membrane. It participates in secondary metabolite biosynthesis; flavonoid biosynthesis. Cytochrome P450 monooxygenase; part of the gene cluster that mediates the biosynthesis of chlorflavonin, a fungal flavonoid with acetolactate synthase inhibitory activity. Within the pathway, cfoH is responsible for the hydroxylation of the flavonoid skeleton at position C2'. The pathway begins with the PKS-NRPS hybrid synthetase cfoA that uses benzoic acid or p-hydroxybenzoic acid as a starter unit with four rounds of chain elongation using malonyl-CoA to form the chalcone skeleton. Then, a new type of chalcone isomerase, cfoK, catalyzes the conversion of the chalcone into a flavanone by a histidine-mediated oxa-Michael addition mechanism. The desaturation of flavanone to flavone is catalyzed by a new type of flavone synthase, the flavin mononucleotide (FMN)-dependent oxidoreductase cfoJ. Monooxygenases cfoF, cfoG, and P450 cfoH are responsible for the hydroxylation of the flavonoid skeleton at sites C3, C8, and C2', respectively. Like cfoF, the dehydratase cfoI plays also a role in the hydroxylation of position C3. Methyltransferases cfoB, cfoC, and cfoD then catalyze the methylation of C7-OH, C8-OH, and C3-OH, respectively. Finally, the monooxygenase cfoE is responsible for the chlorination of flavonoid at position C3'. In Aspergillus candidus, this protein is Cytochrome P450 monooxygenase cfoH.